Consider the following 509-residue polypeptide: Probable cytosol aminopeptidase (509 aa).

Mn(2+) contacts are provided by lysine 277 and aspartate 282. Residue lysine 289 is part of the active site. 3 residues coordinate Mn(2+): aspartate 300, aspartate 359, and glutamate 361. Arginine 363 is a catalytic residue.

Belongs to the peptidase M17 family. The cofactor is Mn(2+).

The protein resides in the cytoplasm. It carries out the reaction Release of an N-terminal amino acid, Xaa-|-Yaa-, in which Xaa is preferably Leu, but may be other amino acids including Pro although not Arg or Lys, and Yaa may be Pro. Amino acid amides and methyl esters are also readily hydrolyzed, but rates on arylamides are exceedingly low.. It catalyses the reaction Release of an N-terminal amino acid, preferentially leucine, but not glutamic or aspartic acids.. Its function is as follows. Presumably involved in the processing and regular turnover of intracellular proteins. Catalyzes the removal of unsubstituted N-terminal amino acids from various peptides. The sequence is that of Probable cytosol aminopeptidase from Chloroherpeton thalassium (strain ATCC 35110 / GB-78).